Consider the following 342-residue polypeptide: Probable long-chain-alcohol O-fatty-acyltransferase 3 (342 aa).

8 consecutive transmembrane segments (helical) span residues 9–29 (IKLWISAIISISYCYYLSTGI), 36–56 (LLSVLPVCALFLVFPLFFSYV), 58–78 (FSGCMAFFLSWLANFKLILFS), 115–135 (IPIWLFAIKVVIFVVLLQMYE), 153–173 (IFLELEIVFMLVKALVFITLG), 227–247 (MFLGVFAAFLVSGAVHEMLFF), 255–275 (TGEVTWFFLLHGVCTVAEVAV), and 297–317 (VGFVVVTSGWFFFPLIRSGII).

The protein belongs to the wax synthase family.

It is found in the membrane. The enzyme catalyses a long chain fatty alcohol + a fatty acyl-CoA = a wax ester + CoA. In terms of biological role, catalyzes the final step in the synthesis of long-chain linear esters (waxes). This chain is Probable long-chain-alcohol O-fatty-acyltransferase 3 (AT3), found in Arabidopsis thaliana (Mouse-ear cress).